Reading from the N-terminus, the 370-residue chain is Putative agmatine deiminase (370 aa).

Residue Cys-361 is the Amidino-cysteine intermediate of the active site.

Belongs to the agmatine deiminase family.

It catalyses the reaction agmatine + H2O = N-carbamoylputrescine + NH4(+). This Shewanella sp. (strain MR-7) protein is Putative agmatine deiminase.